Reading from the N-terminus, the 584-residue chain is Vesicular glutamate transporter 2.1 (584 aa).

The Cytoplasmic segment spans residues 1–70; sequence METPREPAGF…CTCFGLPRRY (70 aa). The helical transmembrane segment at 71 to 91 threads the bilayer; it reads IIAIMSGLGFCISFGIRCNLG. Residues 92 to 124 are Vesicular-facing; the sequence is VAIVSMVNNSTIHLNGKIIIKEKAKFNWDPETV. 2 N-linked (GlcNAc...) asparagine glycosylation sites follow: N99 and N100. The chain crosses the membrane as a helical span at residues 125-145; it reads GLIHGSFFWGYIVTQIPGGYI. At 146-148 the chain is on the cytoplasmic side; sequence SSR. A helical membrane pass occupies residues 149 to 169; it reads LAANRVFGAAILLTSTLNMFI. Residues 170-177 lie on the Vesicular side of the membrane; it reads PSAARGHY. Residues 178-198 form a helical membrane-spanning segment; that stretch reads GCVIFVRILQGLVEGVTYPAC. Over 199 to 216 the chain is Cytoplasmic; the sequence is HGIWSKWAPPLERSRLAT. The helical transmembrane segment at 217–237 threads the bilayer; the sequence is TSFCGSYAGAVIAMPLAGILV. At 238-244 the chain is on the vesicular side; it reads QYTGWSS. The chain crosses the membrane as a helical span at residues 245 to 265; it reads VFYVYGCFGIFWYMFWILVSY. Topologically, residues 266 to 310 are cytoplasmic; the sequence is ESPAEHPTITAEERCYIEESIGESAKLLGPADKFKTPWRKFFTSM. The chain crosses the membrane as a helical span at residues 311-331; the sequence is PVYAIIVANFCRSWTFYLLLI. The Vesicular segment spans residues 332-349; sequence SQPAYFEEVFGFEISKVG. A helical membrane pass occupies residues 350–370; the sequence is MLSALPHLVMTIIVPIGGQLA. Residues 371-386 are Cytoplasmic-facing; it reads DHLRSKNILSTTTVRK. The helical transmembrane segment at 387-407 threads the bilayer; that stretch reads IMNCGGFGMEATLLLIVGYSH. At 408–409 the chain is on the vesicular side; that stretch reads SK. Residues 410–430 traverse the membrane as a helical segment; the sequence is GVAISFLVLAVGFSGFAISGF. Topologically, residues 431 to 445 are cytoplasmic; sequence NVNHLDIAPRYASIL. A helical membrane pass occupies residues 446-466; it reads MGISNGVGTLSGMVCPLIVGA. Over 467 to 477 the chain is Vesicular; the sequence is MTKHKTREEWQ. Residues 478-498 form a helical membrane-spanning segment; that stretch reads YVFLIASLVHYGGVIFYGIFA. At 499 to 584 the chain is on the cytoplasmic side; that stretch reads SGEKQPWADP…YGYRQGGNYS (86 aa).

This sequence belongs to the major facilitator superfamily. Sodium/anion cotransporter family. VGLUT subfamily. In terms of tissue distribution, expressed in spinal cord and retinal ganglion cells.

It localises to the cytoplasmic vesicle. Its subcellular location is the secretory vesicle. The protein localises to the synaptic vesicle membrane. It is found in the membrane. The protein resides in the synapse. It localises to the synaptosome. Its subcellular location is the cell membrane. The catalysed reaction is L-glutamate(out) = L-glutamate(in). It carries out the reaction 3 Na(+)(out) + phosphate(out) = 3 Na(+)(in) + phosphate(in). It catalyses the reaction phosphate(in) = phosphate(out). The enzyme catalyses K(+)(in) + H(+)(out) = K(+)(out) + H(+)(in). The catalysed reaction is chloride(in) = chloride(out). Its activity is regulated as follows. Chloride channel activity is allosterically activated by lumenal H(+) and Cl(-) leading to synaptic vesicles acidification. The L-glutamate transport activity is allosterically activated by lumenal H(+) and Cl(-). The allosteric requirement for H(+) efficiently prevents non-vesicular efflux across the plasma membrane. The L-glutamate uniporter activity exhibits a biphasic dependence on chloride concentration. Multifunctional transporter that transports L-glutamate as well as multiple ions such as chloride, proton, potassium, sodium and phosphate. At the synaptic vesicle membrane, mainly functions as a uniporter which transports preferentially L-glutamate but also, phosphate from the cytoplasm into synaptic vesicles at presynaptic nerve terminals of excitatory neural cells. The L-glutamate or phosphate uniporter activity is electrogenic and is driven by the proton electrochemical gradient, mainly by the electrical gradient established by the vacuolar H(+)-ATPase across the synaptic vesicle membrane. In addition, functions as a chloride channel that allows a chloride permeation through the synaptic vesicle membrane therefore affects the proton electrochemical gradient and promotes synaptic vesicles acidification. Moreover, functions as a vesicular K(+)/H(+) antiport allowing to maintain the electrical gradient and to decrease chemical gradient and therefore sustain vesicular L-glutamate uptake. The vesicular H(+)/H(+) antiport activity is electroneutral. At the plasma membrane, following exocytosis, functions as a symporter of Na(+) and phosphate from the extracellular space to the cytoplasm allowing synaptic phosphate homeostasis regulation. The symporter activity is driven by an inside negative membrane potential and is electrogenic. Also involved in the regulation of retinal hyaloid vessel regression during postnatal development. May also play a role in the endocrine L-glutamatergic system of other tissues such as pineal gland and pancreas. Required for glutamate release by retinotectal synapses and visual acuity. The sequence is that of Vesicular glutamate transporter 2.1 (slc17a6b) from Danio rerio (Zebrafish).